We begin with the raw amino-acid sequence, 364 residues long: NF-kappa-B inhibitor epsilon (364 aa).

The disordered stretch occupies residues 1–108 (MSDARKGPDE…GSPLPPAGVL (108 aa)). Serine 18 is subject to Phosphoserine. The segment covering 36 to 48 (PGSGSSQSGCPQP) has biased composition (low complexity). The segment covering 51-70 (HAPETHKEPEKEDADGERAD) has biased composition (basic and acidic residues). Pro residues predominate over residues 93-104 (PSPPAPGSPLPP). 6 ANK repeats span residues 122–155 (DGDTLLHLAVIHEAPSVLFCCLAFLPQEVLDIQN), 157–186 (LYQTALHLAVHLDQPDVVRALVLKGASRIL), 190–219 (HGDTALHVACRRQNLACACCLLEEQPEPGR), 233–262 (QGLACLHIATLQRNQPLIELLLQNGADIDV), 267–296 (SGKTALHLAVETQERSLVQFLLQAGARVDA), and 300–329 (NGCTPLHLAAGRGLNSISSTLCEAGADSLL).

This sequence belongs to the NF-kappa-B inhibitor family. Interacts with RELA, REL, NFKB1 nuclear factor NF-kappa-B p50 subunit and NFKB2 nuclear factor NF-kappa-B p52 subunit. Interacts with HNRNPA2B1; the interaction may be mediated by the RRM2 domain of HNRNPA2B1, and HNRNPA2B1 may interact simultaneously with FAM76B and either NFKBIA or NFKBIE to form a complex. Post-translationally, serine phosphorylated; followed by proteasome-dependent degradation.

It is found in the cytoplasm. Functionally, sequesters NF-kappa-B transcription factor complexes in the cytoplasm, thereby inhibiting their activity. Sequestered complexes include NFKB1/p50-RELA/p65 and NFKB1/p50-REL/c-Rel complexes. Limits B-cell activation in response to pathogens, and also plays an important role in B-cell development. In Mus musculus (Mouse), this protein is NF-kappa-B inhibitor epsilon (Nfkbie).